A 311-amino-acid polypeptide reads, in one-letter code: Inositol oxygenase 1 (311 aa).

Residues 1 to 11 (MTILIDRHSDQ) show a composition bias toward basic and acidic residues. The segment at 1–29 (MTILIDRHSDQNDAGDEIVEKNQGNGKEE) is disordered. Substrate-binding positions include R52 and 109–111 (DES). Fe cation contacts are provided by H122, H147, and D148. Substrate-binding positions include K151 and 168–169 (GD). Fe cation is bound by residues H220, H246, and D279. 246–247 (HS) contributes to the substrate binding site.

It belongs to the myo-inositol oxygenase family. Requires Fe cation as cofactor. As to expression, expressed in roots, young leaves, stems, flowers and siliques.

Its subcellular location is the cytoplasm. The catalysed reaction is myo-inositol + O2 = D-glucuronate + H2O + H(+). The protein operates within polyol metabolism; myo-inositol degradation into D-glucuronate; D-glucuronate from myo-inositol: step 1/1. Catalyzes the oxygenative cleavage of myo-inositol to D-glucuronate. Involved in the biosynthesis of UDP-glucuronic acid (UDP-GlcA), providing nucleotide sugars for cell-wall polymers. May be also involved in plant ascorbate biosynthesis. The protein is Inositol oxygenase 1 (MIOX1) of Arabidopsis thaliana (Mouse-ear cress).